A 756-amino-acid chain; its full sequence is Receptor-like protein 3 (756 aa).

A signal peptide spans Met-1–Ala-50. Residues Leu-51–Ile-88 are N-cap. The Extracellular segment spans residues Leu-51–Lys-725. N-linked (GlcNAc...) asparagine glycosylation occurs at Asn-66. LRR repeat units lie at residues Asp-95 to Leu-119, His-120 to Ala-143, Asp-145 to Asn-169, Cys-174 to Gln-199, Thr-201 to Ser-225, Ser-226 to Cys-250, Lys-252 to Leu-274, Ser-275 to Leu-298, Thr-299 to Leu-322, Ser-323 to Cys-346, Asn-348 to Arg-370, Phe-371 to Cys-395, Ser-397 to Leu-419, Glu-420 to Gln-443, Cys-445 to Ser-471, Phe-474 to Leu-498, Lys-499 to Thr-521, and Phe-522 to Leu-546. N-linked (GlcNAc...) asparagine glycans are attached at residues Asn-126 and Asn-169. Asn-208 carries N-linked (GlcNAc...) asparagine glycosylation. Residues Asn-262 and Asn-273 are each glycosylated (N-linked (GlcNAc...) asparagine). Residues Asn-334 and Asn-345 are each glycosylated (N-linked (GlcNAc...) asparagine). Asn-381 carries N-linked (GlcNAc...) asparagine glycosylation. 3 N-linked (GlcNAc...) asparagine glycosylation sites follow: Asn-434, Asn-447, and Asn-459. An LRR 19; degenerate repeat occupies Ala-548–Val-569. LRR repeat units follow at residues Ser-570 to Arg-593, Leu-608 to Lys-631, Leu-632 to Leu-656, and Tyr-658 to Thr-681. N-linked (GlcNAc...) asparagine glycosylation occurs at Asn-573. Asn-666 carries an N-linked (GlcNAc...) asparagine glycan. The C-cap/acidic domain stretch occupies residues Leu-699–Lys-725. Residues Phe-726–Phe-746 traverse the membrane as a helical segment. Topologically, residues Phe-747–Lys-756 are cytoplasmic.

The protein belongs to the RLP family. As to expression, expressed at very low levels in the shoot apex.

It localises to the cell membrane. Its function is as follows. Involved in the perception of CLV3 and CLV3-like peptides, that act as extracellular signals regulating meristems maintenance. Contributes, with WAKL22/RFO1, to resistance to F.oxysporum (f.) matthioli in cv. Columbia relative to cv. Ty-0. The protein is Receptor-like protein 3 of Arabidopsis thaliana (Mouse-ear cress).